A 1252-amino-acid polypeptide reads, in one-letter code: MRNLKLRYCKELNAVAHPQHLLLQPELNGGASDIYFVVADNKIYAVQESGDVRLKVIADLPDIVGVEFLQLDNAICVASGAGEVILVDPQTGATSEGTFCDVGIESMAWSPNQEVVAFVTRTHNVVLMTSTFDVIAEQPLDAELDPDQQFVNVGWGKKETQFHGSEGKQAAKQKESDSTFIRDEQELNQDVSISWRGDGEFFVVSYVAAQLGRTFKVYDSEGKLNHTAEKSANLKDSVVWRPTGNWIAVPQQFPNKSTIALFEKNGLRHRELVLPFDLQEEPVVQLRWSEDSDILAIRTCAKEEQRVYLYTIGNYHWYLKQVLIFEQADPLALLHWDTRCGAEHTLHVLKESGKHLVYRWAFAVDRNNSIVGVIDGKRLLLTDFDEAIVPPPMSKIVLKFETYINAFISHGTSLWVYTCDRKIYLNEHIHTLGKELQKPIMLMPDAELSGLHLANLTHFSPHYLLATHSSAGSTRLLLLSYKDNDNKPGEWFYRVHSSVRINGLVNAVAVAPYAMNEFYVQTVNNGHTYEVSLKADKTLKVERSYVQLHEPADQIDWVIVKGCIWDGYTGALVTLRNQHLLHIDGYRIGEDVTSFCVVTNYLVYTQLNAMHFVQLDDRRQVASRNIERGAKIVTAVARKARVVLQLPRGNLEAICPRVLVLELVGDLLERGKYQKAIEMSRKQRINLNIIFDHDVKRFVSSVGAFLNDINEPQWLCLFLSELQNEDFTKGMYSSNYDASKQTYPSDYRVDQKVEYVCRLLEQQMNRFVSRFRLPLITAYVKLGCLEMALQVIWKEQQEDASLADQLLQHLLYLVDVNDLYNVALGTYDFGLVLFVAQKSQKDPKEFLPYLNDLKALPIDYRKFRIDDHLKRYTSALSHLAACGEQHYEEALEYIRKHGLYTDGLAFYREHIEFQKNIYVAYADHLRAIAKLDNASLMYERGGQLQQALLSAKHTLDWQRVLVLAKKLSEPLDQVAQSLVGPLQQQGRHMEAYELVKEHCQDRKRQFDVLLEGHLYSRAIYEAGLEDDDVSEKIAPALLAYGVQLESSLQADLQLFLDYKQRLLDIRRNQAKSGEGYIDTDVNLKEVDLLSDTTSLHSSQYSGTSRRTGKTFRSSKNRRKHERKLFSLKPGNPFEDIALIDALHNHVTKIAQQQQPVRDTCKALLQLANAADADPLAAALQREFKTLLQAVDAALDEIWTPELRGNGLMADHLTGPNVDYLALQKEQRYALLSPLKRFKPQLIMMDWQHEILQ.

The interval 814–1252 (VDVNDLYNVA…MMDWQHEILQ (439 aa)) is mediates dimerization. Phosphoserine is present on S1094. Positions 1097-1116 (SSQYSGTSRRTGKTFRSSKN) are disordered. Residues 1106–1116 (RTGKTFRSSKN) are compositionally biased toward basic residues. The required for binding to tRNA stretch occupies residues 1111-1129 (FRSSKNRRKHERKLFSLKP).

The protein belongs to the ELP1/IKA1 family. As to quaternary structure, homodimer. Component of the elongator complex composed of Elp1, Elp2, Elp3, Elp4, Elp5 and Elp6. The elongator complex associates with and stabilizes microtubules; efficient interaction requires the full complex.

It is found in the cytoplasm. Its subcellular location is the nucleus. It localises to the cytoskeleton. The protein resides in the spindle. The protein operates within tRNA modification; 5-methoxycarbonylmethyl-2-thiouridine-tRNA biosynthesis. Its function is as follows. Component of the elongator complex, which is required for multiple tRNA modifications, including mcm5U (5-methoxycarbonylmethyl uridine), mcm5s2U (5-methoxycarbonylmethyl-2-thiouridine), and ncm5U (5-carbamoylmethyl uridine). The elongator complex catalyzes formation of carboxymethyluridine in the wobble base at position 34 in tRNAs. ELP1 binds to tRNA, mediating interaction of the elongator complex with tRNA. Binding by the elongator complex stabilizes microtubules and promotes their growth. This induces central spindle asymmetry, promoting polarized signaling endosome trafficking during asymmetric cell division and cell fate assignation of sensory organ precursor cells. Involved in protein synthesis-dependent long-term memory formation, probably as part of the elongator complex. The protein is Elongator complex protein 1 of Drosophila melanogaster (Fruit fly).